The chain runs to 66 residues: FMRFamide-like neuropeptides 24 (66 aa).

The signal sequence occupies residues 1–22; the sequence is MSRTSIILVLAIFVAIAAIAQC. The propeptide occupies 23–48; it reads RNIQYDVDEISPEAAFRYAQWGEIPH. Phe61 carries the post-translational modification Phenylalanine amide. The propeptide occupies 65 to 66; that stretch reads SV.

Belongs to the FARP (FMRFamide related peptide) family.

The protein resides in the secreted. In terms of biological role, FMRFamides and FMRFamide-like peptides are neuropeptides. The polypeptide is FMRFamide-like neuropeptides 24 (Caenorhabditis briggsae).